Reading from the N-terminus, the 94-residue chain is Long neurotoxin LNTX8 (94 aa).

The signal sequence occupies residues 1-21 (MKTLLLTLVVVTIMCLDLGYT). Cystine bridges form between Cys24–Cys43, Cys36–Cys64, Cys49–Cys53, Cys68–Cys79, and Cys80–Cys85.

This sequence belongs to the three-finger toxin family. Long-chain subfamily. Type II alpha-neurotoxin sub-subfamily. As to expression, expressed by the venom gland.

Its subcellular location is the secreted. Binds with high affinity to muscular (alpha-1/CHRNA1) and neuronal (alpha-7/CHRNA7) nicotinic acetylcholine receptor (nAChR) and inhibits acetylcholine from binding to the receptor, thereby impairing neuromuscular and neuronal transmission. The protein is Long neurotoxin LNTX8 of Ophiophagus hannah (King cobra).